Consider the following 239-residue polypeptide: ATP-dependent dethiobiotin synthetase BioD (239 aa).

15-20 contacts ATP; that stretch reads EIGKTF. Threonine 19 contacts Mg(2+). Lysine 40 is a catalytic residue. ATP-binding positions include aspartate 57, 118-121, and 178-179; these read EGVG and NH. The Mg(2+) site is built by aspartate 57 and glutamate 118.

Belongs to the dethiobiotin synthetase family. As to quaternary structure, homodimer. Mg(2+) is required as a cofactor.

It localises to the cytoplasm. The enzyme catalyses (7R,8S)-7,8-diammoniononanoate + CO2 + ATP = (4R,5S)-dethiobiotin + ADP + phosphate + 3 H(+). It functions in the pathway cofactor biosynthesis; biotin biosynthesis; biotin from 7,8-diaminononanoate: step 1/2. In terms of biological role, catalyzes a mechanistically unusual reaction, the ATP-dependent insertion of CO2 between the N7 and N8 nitrogen atoms of 7,8-diaminopelargonic acid (DAPA, also called 7,8-diammoniononanoate) to form a ureido ring. The polypeptide is ATP-dependent dethiobiotin synthetase BioD (Burkholderia ambifaria (strain ATCC BAA-244 / DSM 16087 / CCUG 44356 / LMG 19182 / AMMD) (Burkholderia cepacia (strain AMMD))).